A 490-amino-acid chain; its full sequence is Cytochrome P450 2C2 (490 aa).

Residue cysteine 435 participates in heme binding.

This sequence belongs to the cytochrome P450 family. Heme serves as cofactor.

It is found in the endoplasmic reticulum membrane. It localises to the microsome membrane. The enzyme catalyses an organic molecule + reduced [NADPH--hemoprotein reductase] + O2 = an alcohol + oxidized [NADPH--hemoprotein reductase] + H2O + H(+). Functionally, cytochromes P450 are a group of heme-thiolate monooxygenases. In liver microsomes, this enzyme is involved in an NADPH-dependent electron transport pathway. It oxidizes a variety of structurally unrelated compounds, including steroids, fatty acids, and xenobiotics. In the epoxidation of arachidonic acid it generates only 14,15- and 11,12-cis-epoxyeicosatrienoic acids. This Oryctolagus cuniculus (Rabbit) protein is Cytochrome P450 2C2 (CYP2C2).